Here is a 680-residue protein sequence, read N- to C-terminus: Zinc finger protein OBI1 (680 aa).

One can recognise a KRAB domain in the interval 16–87; the sequence is VSFEDVAVDF…AEATEQCLPG (72 aa). The segment at 263–280 adopts a C2H2-type 1; degenerate zinc-finger fold; it reads CHKIFPNKTELSNHDAMH. 8 C2H2-type zinc fingers span residues 455–477, 483–505, 511–533, 539–561, 567–589, 595–617, 623–645, and 651–673; these read FRCN…QRMH, HECK…QGIH, YECN…ERTH, FECK…QKIH, HKCK…QKTH, YECK…ETTH, and YECK…QVIH.

Polyubiquitinated, leading to its degradation via the ubiquitin-proteasome pathway. Expressed during osteogenic differentiation where levels increase from the first days of differentiation and remain high during the whole process. Highly expressed in lung.

It localises to the nucleus. In terms of biological role, may modulate osteogenic differentiation, at least in part, through the bone morphogenetic protein (BMP) signaling pathway, increasing RUNX2 activation and leading to osteoblast commitment and maturation. This chain is Zinc finger protein OBI1 (ObI1), found in Mus musculus (Mouse).